The following is a 362-amino-acid chain: 4-hydroxythreonine-4-phosphate dehydrogenase (362 aa).

T149 contacts substrate. A divalent metal cation-binding residues include H184, H229, and H295. Substrate is bound by residues K303, N312, and R321.

Belongs to the PdxA family. In terms of assembly, homodimer. Requires a divalent metal cation as cofactor.

The protein resides in the cytoplasm. The enzyme catalyses 4-(phosphooxy)-L-threonine + NAD(+) = 3-amino-2-oxopropyl phosphate + CO2 + NADH. It participates in cofactor biosynthesis; pyridoxine 5'-phosphate biosynthesis; pyridoxine 5'-phosphate from D-erythrose 4-phosphate: step 4/5. Catalyzes the NAD(P)-dependent oxidation of 4-(phosphooxy)-L-threonine (HTP) into 2-amino-3-oxo-4-(phosphooxy)butyric acid which spontaneously decarboxylates to form 3-amino-2-oxopropyl phosphate (AHAP). The chain is 4-hydroxythreonine-4-phosphate dehydrogenase from Nostoc sp. (strain PCC 7120 / SAG 25.82 / UTEX 2576).